Consider the following 286-residue polypeptide: MADQSCIAEALQWAYVQLAASSESAHLDAEVLLLYCLNKNRAYLYTWPEKALSVEQWKRFQQMVQRRQQGVPVAHIVGEREFWSLPFIVNDTTLIPRPDTEILVESALNLPLESNAKVLDLGTGTGAIALALASERAAWQITAVDKVEDAVALAKANRTNLKLEQVEILQSDWFSAVTSHDFDLIVSNPPYIDEADEHLHQGDVRFEPQSALTAADEGFADLYYIAKTARDYLKPNGYILLEHGFEQAVKLRAKLIELGYQNVATVRDFGSNDRCTMGKWMGLIGI.

S-adenosyl-L-methionine-binding positions include 122–126 (GTGTG), Asp145, Trp173, and Asn188. Residue 188 to 191 (NPPY) participates in substrate binding.

This sequence belongs to the protein N5-glutamine methyltransferase family. PrmC subfamily.

It carries out the reaction L-glutaminyl-[peptide chain release factor] + S-adenosyl-L-methionine = N(5)-methyl-L-glutaminyl-[peptide chain release factor] + S-adenosyl-L-homocysteine + H(+). Its function is as follows. Methylates the class 1 translation termination release factors RF1/PrfA and RF2/PrfB on the glutamine residue of the universally conserved GGQ motif. This chain is Release factor glutamine methyltransferase, found in Shewanella oneidensis (strain ATCC 700550 / JCM 31522 / CIP 106686 / LMG 19005 / NCIMB 14063 / MR-1).